The sequence spans 121 residues: Fluoride-specific ion channel FluC 3 (121 aa).

4 helical membrane-spanning segments follow: residues V3 to L23, F40 to G60, V69 to V89, and A101 to V121. Na(+) contacts are provided by G76 and S79.

It belongs to the fluoride channel Fluc/FEX (TC 1.A.43) family.

It localises to the cell membrane. It carries out the reaction fluoride(in) = fluoride(out). Its activity is regulated as follows. Na(+) is not transported, but it plays an essential structural role and its presence is essential for fluoride channel function. Functionally, fluoride-specific ion channel. Important for reducing fluoride concentration in the cell, thus reducing its toxicity. The protein is Fluoride-specific ion channel FluC 3 of Bifidobacterium longum (strain NCC 2705).